A 341-amino-acid chain; its full sequence is uncharacterized protein (341 aa).

The span at 1–12 (NSRIAHVPKSKK) shows a compositional bias: basic residues. Disordered regions lie at residues 1–21 (NSRIAHVPKSKKPLNSASPRF) and 291–317 (KARMQMSGKNYQQRPSRTTSPAVNPED). Residues 297-312 (SGKNYQQRPSRTTSPA) are compositionally biased toward polar residues.

This is an uncharacterized protein from Lachancea kluyveri (strain ATCC 58438 / CBS 3082 / BCRC 21498 / NBRC 1685 / JCM 7257 / NCYC 543 / NRRL Y-12651) (Yeast).